The chain runs to 221 residues: Alpha-ketoglutarate-dependent dioxygenase alkB homolog 7, mitochondrial (221 aa).

Residues 1–23 (MAGGGQVVLRTLSQQGWVRGSGA) constitute a mitochondrion transit peptide. Residues H121 and D123 each coordinate Fe cation. Residue Y165 participates in 2-oxoglutarate binding. Residue H177 participates in Fe cation binding. 2-oxoglutarate contacts are provided by residues 197-199 (RIS) and R203.

It belongs to the alkB family. It depends on Fe(2+) as a cofactor.

The protein localises to the mitochondrion matrix. May function as protein hydroxylase; can catalyze auto-hydroxylation at Leu-110 (in vitro), but this activity may be due to the absence of the true substrate. Required to induce programmed necrosis in response to DNA damage caused by cytotoxic alkylating agents. Acts by triggering the collapse of mitochondrial membrane potential and loss of mitochondrial function that leads to energy depletion and cell death. ALKBH7-mediated necrosis is probably required to prevent the accumulation of cells with DNA damage. Does not display DNA demethylase activity. Involved in fatty acid metabolism. This chain is Alpha-ketoglutarate-dependent dioxygenase alkB homolog 7, mitochondrial (ALKBH7), found in Bos taurus (Bovine).